A 565-amino-acid chain; its full sequence is Sulfite reductase [NADPH] hemoprotein beta-component (565 aa).

Residues C429, C435, C474, and C478 each contribute to the [4Fe-4S] cluster site. C478 is a binding site for siroheme.

The protein belongs to the nitrite and sulfite reductase 4Fe-4S domain family. As to quaternary structure, alpha(8)-beta(8). The alpha component is a flavoprotein, the beta component is a hemoprotein. Siroheme is required as a cofactor. It depends on [4Fe-4S] cluster as a cofactor.

It carries out the reaction hydrogen sulfide + 3 NADP(+) + 3 H2O = sulfite + 3 NADPH + 4 H(+). It participates in sulfur metabolism; hydrogen sulfide biosynthesis; hydrogen sulfide from sulfite (NADPH route): step 1/1. Its function is as follows. Component of the sulfite reductase complex that catalyzes the 6-electron reduction of sulfite to sulfide. This is one of several activities required for the biosynthesis of L-cysteine from sulfate. In Shewanella piezotolerans (strain WP3 / JCM 13877), this protein is Sulfite reductase [NADPH] hemoprotein beta-component.